Reading from the N-terminus, the 239-residue chain is Methylthioribulose-1-phosphate dehydratase (239 aa).

Cys94 is a binding site for substrate. Positions 112 and 114 each coordinate Zn(2+). Glu136 serves as the catalytic Proton donor/acceptor. Position 192 (His192) interacts with Zn(2+).

The protein belongs to the aldolase class II family. MtnB subfamily. It depends on Zn(2+) as a cofactor.

It is found in the cytoplasm. It catalyses the reaction 5-(methylsulfanyl)-D-ribulose 1-phosphate = 5-methylsulfanyl-2,3-dioxopentyl phosphate + H2O. The protein operates within amino-acid biosynthesis; L-methionine biosynthesis via salvage pathway; L-methionine from S-methyl-5-thio-alpha-D-ribose 1-phosphate: step 2/6. Its function is as follows. Catalyzes the dehydration of methylthioribulose-1-phosphate (MTRu-1-P) into 2,3-diketo-5-methylthiopentyl-1-phosphate (DK-MTP-1-P). Functions in the methionine salvage pathway. May play a role in apoptosis. In Xenopus laevis (African clawed frog), this protein is Methylthioribulose-1-phosphate dehydratase.